Here is a 42-residue protein sequence, read N- to C-terminus: Photosystem I reaction center subunit IX (42 aa).

Residues 7 to 27 (YLSVAPVLSTLWFGALAGLLI) traverse the membrane as a helical segment.

This sequence belongs to the PsaJ family.

It is found in the plastid. Its subcellular location is the chloroplast thylakoid membrane. Its function is as follows. May help in the organization of the PsaE and PsaF subunits. The polypeptide is Photosystem I reaction center subunit IX (Guizotia abyssinica (Niger)).